The chain runs to 113 residues: MSSIIFSAKDIFEQEFGREVRGYSKVEVDEFLDDVIKDYETYAALVKSLRQEIADLKEELARKPQVSSAPSPSHPDPIDVAASSSMTNFDILKRLNRLEKEVFGKQILDNPDL.

Residues 36–65 are a coiled coil; sequence IKDYETYAALVKSLRQEIADLKEELARKPQ. A disordered region spans residues 61–82; that stretch reads ARKPQVSSAPSPSHPDPIDVAA.

It belongs to the GpsB family. In terms of assembly, forms polymers through the coiled coil domains. Interacts with PBP1, MreC and EzrA.

It localises to the cytoplasm. Functionally, divisome component that associates with the complex late in its assembly, after the Z-ring is formed, and is dependent on DivIC and PBP2B for its recruitment to the divisome. Together with EzrA, is a key component of the system that regulates PBP1 localization during cell cycle progression. Its main role could be the removal of PBP1 from the cell pole after pole maturation is completed. Also contributes to the recruitment of PBP1 to the division complex. Not essential for septum formation. This chain is Cell cycle protein GpsB, found in Streptococcus pneumoniae (strain Hungary19A-6).